A 533-amino-acid chain; its full sequence is Probable DNA ligase (533 aa).

Glutamate 211 provides a ligand contact to ATP. Lysine 213 acts as the N6-AMP-lysine intermediate in catalysis. The ATP site is built by arginine 218, arginine 233, glutamate 262, phenylalanine 302, arginine 374, and lysine 380. Residues 512–533 (LAGEAAEKGQAEGGGEELEDDG) are disordered.

This sequence belongs to the ATP-dependent DNA ligase family. It depends on Mg(2+) as a cofactor.

The catalysed reaction is ATP + (deoxyribonucleotide)n-3'-hydroxyl + 5'-phospho-(deoxyribonucleotide)m = (deoxyribonucleotide)n+m + AMP + diphosphate.. In terms of biological role, DNA ligase that seals nicks in double-stranded DNA during DNA replication, DNA recombination and DNA repair. The sequence is that of Probable DNA ligase from Sorangium cellulosum (strain So ce56) (Polyangium cellulosum (strain So ce56)).